Consider the following 367-residue polypeptide: DNA replication and repair protein RecF (367 aa).

30 to 37 (GANGSGKT) contributes to the ATP binding site.

It belongs to the RecF family.

The protein resides in the cytoplasm. Its function is as follows. The RecF protein is involved in DNA metabolism; it is required for DNA replication and normal SOS inducibility. RecF binds preferentially to single-stranded, linear DNA. It also seems to bind ATP. The sequence is that of DNA replication and repair protein RecF from Pseudomonas savastanoi pv. phaseolicola (strain 1448A / Race 6) (Pseudomonas syringae pv. phaseolicola (strain 1448A / Race 6)).